Consider the following 128-residue polypeptide: Sulfurtransferase TusD (128 aa).

Catalysis depends on Cys78, which acts as the Cysteine persulfide intermediate.

It belongs to the DsrE/TusD family. As to quaternary structure, heterohexamer, formed by a dimer of trimers. The hexameric TusBCD complex contains 2 copies each of TusB, TusC and TusD. The TusBCD complex interacts with TusE.

The protein localises to the cytoplasm. Functionally, part of a sulfur-relay system required for 2-thiolation of 5-methylaminomethyl-2-thiouridine (mnm(5)s(2)U) at tRNA wobble positions. Accepts sulfur from TusA and transfers it in turn to TusE. This chain is Sulfurtransferase TusD, found in Salmonella typhi.